A 386-amino-acid chain; its full sequence is 26S proteasome non-ATPase regulatory subunit 13 homolog A (386 aa).

Ala2 carries the N-acetylalanine modification. The region spanning Glu173–Pro347 is the PCI domain.

This sequence belongs to the proteasome subunit S11 family. As to quaternary structure, component of the 19S regulatory particle (RP/PA700) lid subcomplex of the 26S proteasome. The 26S proteasome is composed of a core protease (CP), known as the 20S proteasome, capped at one or both ends by the 19S regulatory particle (RP/PA700). The RP/PA700 complex is composed of at least 17 different subunits in two subcomplexes, the base and the lid, which form the portions proximal and distal to the 20S proteolytic core, respectively. In terms of tissue distribution, ubiquitous with highest expression in flowers.

Acts as a regulatory subunit of the 26S proteasome which is involved in the ATP-dependent degradation of ubiquitinated proteins. The sequence is that of 26S proteasome non-ATPase regulatory subunit 13 homolog A (RPN9A) from Arabidopsis thaliana (Mouse-ear cress).